The following is a 637-amino-acid chain: Sec1 family domain-containing protein 1 (637 aa).

3 positions are modified to phosphoserine: serine 32, serine 298, and serine 523.

This sequence belongs to the STXBP/unc-18/SEC1 family. In terms of assembly, interacts with STX17. Interacts with the COG complex via COG4. Interacts with STX5A. As to expression, highly expressed in testis. Detected at lower levels in brain, astrocytes, heart and small intestine.

It localises to the cytoplasm. The protein localises to the endoplasmic reticulum membrane. Its subcellular location is the golgi apparatus. It is found in the golgi stack membrane. In terms of biological role, plays a role in SNARE-pin assembly and Golgi-to-ER retrograde transport via its interaction with COG4. Involved in vesicular transport between the endoplasmic reticulum and the Golgi. The protein is Sec1 family domain-containing protein 1 (Scfd1) of Rattus norvegicus (Rat).